We begin with the raw amino-acid sequence, 260 residues long: Translation initiation factor 2 subunit alpha (260 aa).

Positions 12–83 (GDLIVGTVHK…KKGHVDASLK (72 aa)) constitute an S1 motif domain.

Belongs to the eIF-2-alpha family. As to quaternary structure, heterotrimer composed of an alpha, a beta and a gamma chain.

Functionally, eIF-2 functions in the early steps of protein synthesis by forming a ternary complex with GTP and initiator tRNA. The chain is Translation initiation factor 2 subunit alpha from Methanosphaera stadtmanae (strain ATCC 43021 / DSM 3091 / JCM 11832 / MCB-3).